Consider the following 185-residue polypeptide: Ribosome-recycling factor (185 aa).

Belongs to the RRF family.

It is found in the cytoplasm. Functionally, responsible for the release of ribosomes from messenger RNA at the termination of protein biosynthesis. May increase the efficiency of translation by recycling ribosomes from one round of translation to another. In Zymomonas mobilis subsp. mobilis (strain ATCC 31821 / ZM4 / CP4), this protein is Ribosome-recycling factor.